Reading from the N-terminus, the 271-residue chain is Putative phosphoenolpyruvate synthase regulatory protein (271 aa).

An ADP-binding site is contributed by 152–159; sequence GVSRCGKT.

This sequence belongs to the pyruvate, phosphate/water dikinase regulatory protein family. PSRP subfamily.

The enzyme catalyses [pyruvate, water dikinase] + ADP = [pyruvate, water dikinase]-phosphate + AMP + H(+). It carries out the reaction [pyruvate, water dikinase]-phosphate + phosphate + H(+) = [pyruvate, water dikinase] + diphosphate. In terms of biological role, bifunctional serine/threonine kinase and phosphorylase involved in the regulation of the phosphoenolpyruvate synthase (PEPS) by catalyzing its phosphorylation/dephosphorylation. The chain is Putative phosphoenolpyruvate synthase regulatory protein from Legionella pneumophila (strain Lens).